A 184-amino-acid polypeptide reads, in one-letter code: Signal peptidase I S (184 aa).

Residues 1-18 lie on the Cytoplasmic side of the membrane; the sequence is MKSENVSKKKSILEWAKA. The chain crosses the membrane as a helical span at residues 19–39; sequence IVIAVVLALLIRNFIFAPYVV. Over 40–184 the chain is Extracellular; the sequence is DGDSMYPTLH…YPFNEMRKTN (145 aa). Active-site residues include S43 and K83.

Belongs to the peptidase S26 family.

The protein resides in the cell membrane. It carries out the reaction Cleavage of hydrophobic, N-terminal signal or leader sequences from secreted and periplasmic proteins.. In terms of biological role, not essential for cell viability, but required for efficient secretion of many proteins. The sequence is that of Signal peptidase I S (sipS) from Bacillus subtilis (strain 168).